Here is a 1941-residue protein sequence, read N- to C-terminus: Diacylglycerol kinase eta (1941 aa).

The PH domain occupies 93–186 (SIIKEGYLLK…WLGSLKAATA (94 aa)). Phorbol-ester/DAG-type zinc fingers lie at residues 206-256 (HHHW…IANC) and 279-330 (PHQW…AIAC). Residues 361–497 (GNFSPLLVFV…DRWSIMVFEK (137 aa)) enclose the DAGKc domain. 4 disordered regions span residues 1030–1068 (TTTL…SPPR), 1132–1164 (CNSN…ETPT), 1215–1257 (LESA…PSSS), and 1276–1295 (RRHS…KDKD). Residues 1133–1155 (NSNNNSNNNSNSNSNNNNHNDGN) are compositionally biased toward low complexity. The 64-residue stretch at 1878-1941 (WSVNEVVTWL…LQAIKDLSEN (64 aa)) folds into the SAM domain.

It belongs to the eukaryotic diacylglycerol kinase family.

The protein resides in the cytoplasm. The catalysed reaction is a 1,2-diacyl-sn-glycerol + ATP = a 1,2-diacyl-sn-glycero-3-phosphate + ADP + H(+). Functionally, phosphorylates diacylglycerol (DAG) to generate phosphatidic acid (PA). This is Diacylglycerol kinase eta from Drosophila grimshawi (Hawaiian fruit fly).